A 273-amino-acid polypeptide reads, in one-letter code: Thiazole synthase (273 aa).

Lys-110 acts as the Schiff-base intermediate with DXP in catalysis. Residues Gly-171, 197–198 (AG), and 219–220 (NT) contribute to the 1-deoxy-D-xylulose 5-phosphate site. The interval 251–273 (MAAQDSAQPSTPVLGTPFWHHAP) is disordered.

Belongs to the ThiG family. In terms of assembly, homotetramer. Forms heterodimers with either ThiH or ThiS.

The protein resides in the cytoplasm. The enzyme catalyses [ThiS sulfur-carrier protein]-C-terminal-Gly-aminoethanethioate + 2-iminoacetate + 1-deoxy-D-xylulose 5-phosphate = [ThiS sulfur-carrier protein]-C-terminal Gly-Gly + 2-[(2R,5Z)-2-carboxy-4-methylthiazol-5(2H)-ylidene]ethyl phosphate + 2 H2O + H(+). It functions in the pathway cofactor biosynthesis; thiamine diphosphate biosynthesis. Functionally, catalyzes the rearrangement of 1-deoxy-D-xylulose 5-phosphate (DXP) to produce the thiazole phosphate moiety of thiamine. Sulfur is provided by the thiocarboxylate moiety of the carrier protein ThiS. In vitro, sulfur can be provided by H(2)S. The chain is Thiazole synthase from Variovorax paradoxus (strain S110).